The chain runs to 307 residues: Dihydroorotate dehydrogenase A (fumarate) (307 aa).

Residues Ser21 and 46–47 (KT) each bind FMN. Residues Lys46, 70–74 (NSVGL), and Asn130 contribute to the substrate site. Asn130 contributes to the FMN binding site. Cys133 acts as the Nucleophile in catalysis. Residues Lys168 and Ile194 each contribute to the FMN site. Residue 195–196 (NT) participates in substrate binding. FMN is bound by residues Gly220, 246-247 (GG), and 268-269 (GS).

This sequence belongs to the dihydroorotate dehydrogenase family. Type 1 subfamily. As to quaternary structure, homodimer. It depends on FMN as a cofactor.

Its subcellular location is the cytoplasm. It carries out the reaction (S)-dihydroorotate + fumarate = orotate + succinate. It participates in pyrimidine metabolism; UMP biosynthesis via de novo pathway. Functionally, catalyzes the conversion of dihydroorotate to orotate with fumarate as the electron acceptor. This chain is Dihydroorotate dehydrogenase A (fumarate) (pyrD), found in Lactobacillus helveticus (strain DPC 4571).